The primary structure comprises 725 residues: Threonine--tRNA ligase, cytoplasmic (725 aa).

One can recognise a TGS domain in the interval 80-142 (EPIQITLPDG…EGNAKLELLK (63 aa)).

The protein belongs to the class-II aminoacyl-tRNA synthetase family.

It localises to the cytoplasm. It catalyses the reaction tRNA(Thr) + L-threonine + ATP = L-threonyl-tRNA(Thr) + AMP + diphosphate + H(+). The sequence is that of Threonine--tRNA ligase, cytoplasmic from Caenorhabditis elegans.